The following is a 445-amino-acid chain: Phosphoglucosamine mutase (445 aa).

Ser99 functions as the Phosphoserine intermediate in the catalytic mechanism. Positions 99, 242, 244, and 246 each coordinate Mg(2+). Ser99 bears the Phosphoserine mark.

This sequence belongs to the phosphohexose mutase family. Mg(2+) is required as a cofactor. Post-translationally, activated by phosphorylation.

The enzyme catalyses alpha-D-glucosamine 1-phosphate = D-glucosamine 6-phosphate. In terms of biological role, catalyzes the conversion of glucosamine-6-phosphate to glucosamine-1-phosphate. This Helicobacter pylori (strain HPAG1) protein is Phosphoglucosamine mutase.